The chain runs to 148 residues: Cathelicidin-1 (148 aa).

An N-terminal signal peptide occupies residues 1–17 (MLSCWVLLLALLGGACA). Residues 18–122 (LPAPLGYSQA…TCVDSMADPV (105 aa)) constitute a propeptide that is removed on maturation. 2 disulfides stabilise this stretch: Cys-75–Cys-86 and Cys-97–Cys-114.

The protein belongs to the cathelicidin family. Detected in gizzard, liver, small intestine, large intestine, cloaca, bursa of Fabricius, gall bladder, lung, trachea, kidney, testis and bone marrow.

It is found in the secreted. Binds bacterial lipopolysaccharide (LPS). Has potent antimicrobial activity against Gram-positive and Gram-negative bacteria (in vitro). Has hemolytic activity (in vitro). May play a role in the innate immune response. The sequence is that of Cathelicidin-1 (CATHL1) from Gallus gallus (Chicken).